The chain runs to 333 residues: Ribosomal RNA small subunit methyltransferase H (333 aa).

Residues 31-33 (GGY), aspartate 49, phenylalanine 76, aspartate 134, and glutamine 141 each bind S-adenosyl-L-methionine.

Belongs to the methyltransferase superfamily. RsmH family.

It localises to the cytoplasm. The catalysed reaction is cytidine(1402) in 16S rRNA + S-adenosyl-L-methionine = N(4)-methylcytidine(1402) in 16S rRNA + S-adenosyl-L-homocysteine + H(+). Its function is as follows. Specifically methylates the N4 position of cytidine in position 1402 (C1402) of 16S rRNA. The sequence is that of Ribosomal RNA small subunit methyltransferase H from Wolbachia sp. subsp. Brugia malayi (strain TRS).